A 325-amino-acid polypeptide reads, in one-letter code: DNA-directed RNA polymerase subunit alpha (325 aa).

An alpha N-terminal domain (alpha-NTD) region spans residues 1–238; it reads MSLKSLLKGF…EHLTVFINFE (238 aa). Residues 255-325 form an alpha C-terminal domain (alpha-CTD) region; that stretch reads LKASLSKHVE…LGLSFGMRDF (71 aa).

The protein belongs to the RNA polymerase alpha chain family. In terms of assembly, homodimer. The RNAP catalytic core consists of 2 alpha, 1 beta, 1 beta' and 1 omega subunit. When a sigma factor is associated with the core the holoenzyme is formed, which can initiate transcription.

The enzyme catalyses RNA(n) + a ribonucleoside 5'-triphosphate = RNA(n+1) + diphosphate. DNA-dependent RNA polymerase catalyzes the transcription of DNA into RNA using the four ribonucleoside triphosphates as substrates. This is DNA-directed RNA polymerase subunit alpha from Leptospira interrogans serogroup Icterohaemorrhagiae serovar copenhageni (strain Fiocruz L1-130).